The primary structure comprises 234 residues: Thioredoxin-dependent peroxide reductase, mitochondrial (234 aa).

Residues 1–30 constitute a mitochondrion transit peptide; sequence MSFVARSLIRNVPLMGKAILSQQKQIAARL. The 159-residue stretch at 40-198 folds into the Thioredoxin domain; sequence VRVQQPAPDF…VLRLIKAFQF (159 aa). Residue C85 is the Cysteine sulfenic acid (-SOH) intermediate of the active site.

It belongs to the peroxiredoxin family. AhpC/Prx1 subfamily. As to quaternary structure, homodimer; disulfide-linked, upon oxidation. 6 homodimers assemble to form a ring-like dodecamer. Also exists as a monomer, however the monomeric form is present at a much lower level than the homodimeric form. As to expression, expressed in thoracic flight muscles (at protein level). Detected in the head and body (at protein level).

It is found in the mitochondrion. The enzyme catalyses a hydroperoxide + [thioredoxin]-dithiol = an alcohol + [thioredoxin]-disulfide + H2O. Its function is as follows. Thiol-specific peroxidase that catalyzes the reduction of hydrogen peroxide and organic hydroperoxides to water and alcohols, respectively. Plays a role in cell protection against oxidative stress by detoxifying peroxides. May be involved in aging-associated changes in the responsiveness to oxidative stress. Involved in the maintenance of global thiol redox homeostasis. Functions in the central nervous system (CNS) and in motor neurons and is essential for normal motor function. The sequence is that of Thioredoxin-dependent peroxide reductase, mitochondrial from Drosophila melanogaster (Fruit fly).